The primary structure comprises 726 residues: Uracil catabolism protein 2 (726 aa).

Residues 24–53 (CGVCRKFKTRCDFEPLVGKCHRCNVLRLEC) constitute a DNA-binding region (zn(2)-C6 fungal-type). 2 disordered regions span residues 152–183 (AGMG…FVNG) and 629–681 (SGRL…SGAD). Residues 161–170 (YDDDDDGDDD) are compositionally biased toward acidic residues. The span at 640 to 679 (RGSPSMTPGFQQSVQSSSALQGSKAGSPQSARSVNSQGSG) shows a compositional bias: polar residues.

The protein belongs to the URC2 family.

The protein localises to the nucleus. Its function is as follows. Probable transcriptional activator involved in uracil catabolism. The chain is Uracil catabolism protein 2 (URC2) from Lachancea kluyveri (Yeast).